The primary structure comprises 345 residues: Dihydroorotase (345 aa).

Zn(2+) is bound by residues histidine 13 and histidine 15. Substrate is bound by residues histidine 15–arginine 17 and asparagine 41. Zn(2+)-binding residues include lysine 98, histidine 135, and histidine 173. Lysine 98 carries the N6-carboxylysine modification. Substrate is bound at residue histidine 135. Leucine 218 provides a ligand contact to substrate. Aspartate 246 serves as a coordination point for Zn(2+). Aspartate 246 is an active-site residue. Substrate contacts are provided by histidine 250 and alanine 262.

Belongs to the metallo-dependent hydrolases superfamily. DHOase family. Class II DHOase subfamily. As to quaternary structure, homodimer. Zn(2+) serves as cofactor.

The catalysed reaction is (S)-dihydroorotate + H2O = N-carbamoyl-L-aspartate + H(+). Its pathway is pyrimidine metabolism; UMP biosynthesis via de novo pathway; (S)-dihydroorotate from bicarbonate: step 3/3. Catalyzes the reversible cyclization of carbamoyl aspartate to dihydroorotate. The chain is Dihydroorotase from Shewanella halifaxensis (strain HAW-EB4).